The following is a 111-amino-acid chain: Cornifelin (111 aa).

It belongs to the cornifelin family. Directly or indirectly cross-linked to CE proteins loricin and involucrin (IVL).

The protein resides in the cytoplasm. In terms of biological role, part of the insoluble cornified cell envelope (CE) of stratified squamous epithelia. The chain is Cornifelin (CNFN) from Bos taurus (Bovine).